The chain runs to 172 residues: Protein-export protein SecB (172 aa).

The tract at residues 153–172 is disordered; it reads AQGQGGDSGIVMPDGSQARH.

The protein belongs to the SecB family. As to quaternary structure, homotetramer, a dimer of dimers. One homotetramer interacts with 1 SecA dimer.

The protein resides in the cytoplasm. Its function is as follows. One of the proteins required for the normal export of preproteins out of the cell cytoplasm. It is a molecular chaperone that binds to a subset of precursor proteins, maintaining them in a translocation-competent state. It also specifically binds to its receptor SecA. This chain is Protein-export protein SecB, found in Cupriavidus metallidurans (strain ATCC 43123 / DSM 2839 / NBRC 102507 / CH34) (Ralstonia metallidurans).